The primary structure comprises 138 residues: Small ribosomal subunit protein uS11c (138 aa).

The tract at residues 1–21 (MAKSISKIGSRKNARIGSRKQ) is disordered. Residues 9–21 (GSRKNARIGSRKQ) show a composition bias toward basic residues.

It belongs to the universal ribosomal protein uS11 family. In terms of assembly, part of the 30S ribosomal subunit.

Its subcellular location is the plastid. The protein resides in the chloroplast. In Cicer arietinum (Chickpea), this protein is Small ribosomal subunit protein uS11c.